A 130-amino-acid chain; its full sequence is MTETRTYATGKRKTAVARVFLSPGTGNIKVNQRPADDYFVRETSRMVMRQSLELLELLDQFDVSATVVGGGHSAQAEAMRHGIARALCELDPERRPSLKRAGFLTRDARKKERKKYGQPGARKRFQYSKR.

The disordered stretch occupies residues 98 to 130 (LKRAGFLTRDARKKERKKYGQPGARKRFQYSKR). Residues 111–130 (KERKKYGQPGARKRFQYSKR) are compositionally biased toward basic residues.

Belongs to the universal ribosomal protein uS9 family.

The chain is Small ribosomal subunit protein uS9 from Sorangium cellulosum (strain So ce56) (Polyangium cellulosum (strain So ce56)).